The chain runs to 215 residues: Octanoyltransferase (215 aa).

The BPL/LPL catalytic domain maps to 31-206 (PDSQDEIWLV…QLVKHLDYAE (176 aa)). Substrate is bound by residues 70–77 (RGGQVTYH), 137–139 (SLG), and 150–152 (GLA). Cys168 serves as the catalytic Acyl-thioester intermediate.

This sequence belongs to the LipB family.

The protein resides in the cytoplasm. The enzyme catalyses octanoyl-[ACP] + L-lysyl-[protein] = N(6)-octanoyl-L-lysyl-[protein] + holo-[ACP] + H(+). It participates in protein modification; protein lipoylation via endogenous pathway; protein N(6)-(lipoyl)lysine from octanoyl-[acyl-carrier-protein]: step 1/2. Catalyzes the transfer of endogenously produced octanoic acid from octanoyl-acyl-carrier-protein onto the lipoyl domains of lipoate-dependent enzymes. Lipoyl-ACP can also act as a substrate although octanoyl-ACP is likely to be the physiological substrate. The protein is Octanoyltransferase of Pseudomonas putida (strain GB-1).